Here is a 387-residue protein sequence, read N- to C-terminus: Patatin group A-3 (387 aa).

An N-terminal signal peptide occupies residues 1 to 23 (MATTKSFLILIVMILATTSSTFA). A PNPLA domain is found at 32–230 (LSIDGGGVKG…TVADPALLSV (199 aa)). Residues 36–41 (GGGVKG) carry the GXGXXG motif. The GXSXG signature appears at 75-79 (GTSTG). Ser-77 serves as the catalytic Nucleophile. An N-linked (GlcNAc...) asparagine glycan is attached at Asn-115. The active-site Proton acceptor is Asp-216. The DGA/G motif lies at 216–218 (DGA). A coiled-coil region spans residues 361 to 385 (ETYEEALKRFAKLLSDRKKLRANKA).

It belongs to the patatin family. Tuber and stolon.

The protein localises to the vacuole. In terms of biological role, probable lipolytic acyl hydrolase (LAH), an activity which is thought to be involved in the response of tubers to pathogens. In Solanum tuberosum (Potato), this protein is Patatin group A-3.